Here is a 485-residue protein sequence, read N- to C-terminus: Glutamate--tRNA ligase 1 (485 aa).

Residues 10-20 (PSPTGAIHIGN) carry the 'HIGH' region motif. A 'KMSKS' region motif is present at residues 252-256 (KLSKR). Residue Lys255 coordinates ATP.

It belongs to the class-I aminoacyl-tRNA synthetase family. Glutamate--tRNA ligase type 1 subfamily. As to quaternary structure, monomer.

It is found in the cytoplasm. It catalyses the reaction tRNA(Glu) + L-glutamate + ATP = L-glutamyl-tRNA(Glu) + AMP + diphosphate. Functionally, catalyzes the attachment of glutamate to tRNA(Glu) in a two-step reaction: glutamate is first activated by ATP to form Glu-AMP and then transferred to the acceptor end of tRNA(Glu). In Thermoanaerobacter sp. (strain X514), this protein is Glutamate--tRNA ligase 1.